The following is a 93-amino-acid chain: Cobalt transport protein CbiN (93 aa).

2 helical membrane passes run 5–25 and 63–83; these read LMLL…NHGG and LLFT…LGYC.

The protein belongs to the CbiN family. In terms of assembly, forms an energy-coupling factor (ECF) transporter complex composed of an ATP-binding protein (A component, CbiO), a transmembrane protein (T component, CbiQ) and 2 possible substrate-capture proteins (S components, CbiM and CbiN) of unknown stoichimetry.

Its subcellular location is the cell inner membrane. It participates in cofactor biosynthesis; adenosylcobalamin biosynthesis. Part of the energy-coupling factor (ECF) transporter complex CbiMNOQ involved in cobalt import. The protein is Cobalt transport protein CbiN of Salmonella choleraesuis (strain SC-B67).